Consider the following 170-residue polypeptide: Peptidyl-prolyl cis-trans isomerase-like 3 (170 aa).

The PPIase cyclophilin-type domain maps to 1 to 160 (MSVTLHTDLG…QEFRIKSVTI (160 aa)).

Belongs to the cyclophilin-type PPIase family. PPIL3 subfamily.

It carries out the reaction [protein]-peptidylproline (omega=180) = [protein]-peptidylproline (omega=0). Functionally, PPIases accelerate the folding of proteins. It catalyzes the cis-trans isomerization of proline imidic peptide bonds in oligopeptides. This chain is Peptidyl-prolyl cis-trans isomerase-like 3 (cyp4), found in Rhizopus delemar (strain RA 99-880 / ATCC MYA-4621 / FGSC 9543 / NRRL 43880) (Mucormycosis agent).